A 309-amino-acid chain; its full sequence is Putative S-adenosyl-L-methionine-dependent methyltransferase Mvan_0104 (309 aa).

Residues Asp134 and 163–164 contribute to the S-adenosyl-L-methionine site; that span reads DL.

This sequence belongs to the UPF0677 family.

Exhibits S-adenosyl-L-methionine-dependent methyltransferase activity. This Mycolicibacterium vanbaalenii (strain DSM 7251 / JCM 13017 / BCRC 16820 / KCTC 9966 / NRRL B-24157 / PYR-1) (Mycobacterium vanbaalenii) protein is Putative S-adenosyl-L-methionine-dependent methyltransferase Mvan_0104.